The sequence spans 389 residues: MATDALSIARDLVRCPSVTPADAGALGVLEKLLGDAGFEVHRVTFSEPGAADIDNLYARIGATGPHIAFAGHTDVVPPGDESAWTHGAFSGEVKDGFLYGRGTVDMKGGIACSAAATLEYLEAHGGRPGKDGNGSISFLITGDEEDIAVNGTVKLMQWAAARGEKFDHCVLGEPSNVAELGDCIKIGRRGSQSGTLYVEGVQGHVAYPHRASNPIPDIAALITALVSEPLDQGSAQFQPSNLAFTSVDVGNPANNVIPGQARAKFNVRFNDHHNQESLRALIEARVAKVSGNRIRTRIVWEPSNADVFVTRPGPFTDLVVAAIEEVTGRRPELNTGGGTSDARFIKDYCPVIEFGLVGQTMHQIDERAPVADLEKLTRIYHGVLDRYFA.

Histidine 72 is a binding site for Zn(2+). Aspartate 74 is a catalytic residue. Aspartate 105 provides a ligand contact to Zn(2+). The active-site Proton acceptor is glutamate 144. The Zn(2+) site is built by glutamate 145, glutamate 173, and histidine 362.

It belongs to the peptidase M20A family. DapE subfamily. In terms of assembly, homodimer. Requires Zn(2+) as cofactor. It depends on Co(2+) as a cofactor.

The enzyme catalyses N-succinyl-(2S,6S)-2,6-diaminopimelate + H2O = (2S,6S)-2,6-diaminopimelate + succinate. It functions in the pathway amino-acid biosynthesis; L-lysine biosynthesis via DAP pathway; LL-2,6-diaminopimelate from (S)-tetrahydrodipicolinate (succinylase route): step 3/3. Its function is as follows. Catalyzes the hydrolysis of N-succinyl-L,L-diaminopimelic acid (SDAP), forming succinate and LL-2,6-diaminopimelate (DAP), an intermediate involved in the bacterial biosynthesis of lysine and meso-diaminopimelic acid, an essential component of bacterial cell walls. In Nitrobacter hamburgensis (strain DSM 10229 / NCIMB 13809 / X14), this protein is Succinyl-diaminopimelate desuccinylase.